The primary structure comprises 396 residues: Inositol polyphosphate multikinase (396 aa).

The span at 1 to 13 (MAAEPPALRLRPP) shows a compositional bias: low complexity. The tract at residues 1 to 22 (MAAEPPALRLRPPGSTGDSPPV) is disordered. A2 is subject to N-acetylalanine. S19 bears the Phosphoserine mark. K58 serves as a coordination point for ATP. R65 is a substrate binding site. Residues 114-116 (EDV) and D127 contribute to the ATP site. Residues K129, 143-150 (KIQQQVSK), and Q179 each bind substrate. Residues 300–310 (RHRKLYAKKHQ) carry the Nuclear localization signal motif. An ATP-binding site is contributed by D365.

This sequence belongs to the inositol phosphokinase (IPK) family. Mg(2+) is required as a cofactor. In terms of tissue distribution, highly expressed in kidney, and at lower levels in hippocampus, brain cortex, cerebellum, heart and lung.

The protein localises to the nucleus. It catalyses the reaction 1D-myo-inositol 1,4,5-trisphosphate + 2 ATP = 1D-myo-inositol 1,3,4,5,6-pentakisphosphate + 2 ADP + 2 H(+). It carries out the reaction 1D-myo-inositol 1,3,4,6-tetrakisphosphate + ATP = 1D-myo-inositol 1,3,4,5,6-pentakisphosphate + ADP + H(+). The enzyme catalyses 1-octadecanoyl-2-(5Z,8Z,11Z,14Z)-eicosatetraenoyl-sn-glycero-3-phospho-1D-myo-inositol 4,5-bisphosphate + ATP = 1-octadecanoyl-2-(5Z,8Z,11Z,14Z-eicosatetraenoyl)-sn-glycero-3-phospho-(1D-myo-inositol 3,4,5-triphosphate) + ADP + H(+). The catalysed reaction is a 1,2-diacyl-sn-glycero-3-phospho-(1D-myo-inositol-4,5-bisphosphate) + ATP = a 1,2-diacyl-sn-glycero-3-phospho-(1D-myo-inositol-3,4,5-trisphosphate) + ADP + H(+). It catalyses the reaction 1D-myo-inositol 1,4,5,6-tetrakisphosphate + ATP = 1D-myo-inositol 1,3,4,5,6-pentakisphosphate + ADP + H(+). It participates in phospholipid metabolism; phosphatidylinositol metabolism. Its function is as follows. Inositol phosphate kinase with a broad substrate specificity. Phosphorylates inositol 1,4,5-trisphosphate (Ins(1,4,5)P3) first to inositol 1,3,4,5-tetrakisphosphate and then to inositol 1,3,4,5,6-pentakisphosphate (Ins(1,3,4,5,6)P5). Phosphorylates inositol 1,3,4,6-tetrakisphosphate (Ins(1,3,4,6)P4). Phosphorylates inositol 1,4,5,6-tetrakisphosphate (Ins(1,4,5,6)P4). Phosphorylates glycero-3-phospho-1D-myo-inositol 4,5-bisphosphate to glycero-3-phospho-1D-myo-inositol 3,4,5-trisphosphate. Plays an important role in MLKL-mediated necroptosis via its role in the biosynthesis of inositol pentakisphosphate (InsP5) and inositol hexakisphosphate (InsP6). Binding of these highly phosphorylated inositol phosphates to MLKL mediates the release of an N-terminal auto-inhibitory region, leading to activation of the kinase. Essential for activated phospho-MLKL to oligomerize and localize to the cell membrane during necroptosis. Required for normal embryonic development, probably via its role in the biosynthesis of inositol 1,3,4,5,6-pentakisphosphate (Ins(1,3,4,5,6)P5) and inositol hexakisphosphate (InsP6). This Rattus norvegicus (Rat) protein is Inositol polyphosphate multikinase (Ipmk).